Here is a 296-residue protein sequence, read N- to C-terminus: 4-hydroxybenzoate octaprenyltransferase (296 aa).

Transmembrane regions (helical) follow at residues 28–48 (IGTL…SDGI), 51–71 (LAVL…GCVI), 102–122 (LLLT…LNHL), 143–163 (FFPI…PMAF), 174–194 (AWIL…VYAM), 212–232 (FGRY…LLMA), 233–253 (VLGA…IVLL), and 274–294 (FLAN…HTFF).

This sequence belongs to the UbiA prenyltransferase family. Mg(2+) serves as cofactor.

The protein resides in the cell inner membrane. It catalyses the reaction all-trans-octaprenyl diphosphate + 4-hydroxybenzoate = 4-hydroxy-3-(all-trans-octaprenyl)benzoate + diphosphate. It functions in the pathway cofactor biosynthesis; ubiquinone biosynthesis. In terms of biological role, catalyzes the prenylation of para-hydroxybenzoate (PHB) with an all-trans polyprenyl group. Mediates the second step in the final reaction sequence of ubiquinone-8 (UQ-8) biosynthesis, which is the condensation of the polyisoprenoid side chain with PHB, generating the first membrane-bound Q intermediate 3-octaprenyl-4-hydroxybenzoate. The protein is 4-hydroxybenzoate octaprenyltransferase of Neisseria meningitidis serogroup C (strain 053442).